Consider the following 350-residue polypeptide: Cilia- and flagella-associated protein 36 (350 aa).

Residues 142–167 (SELEQQEMKILQEVLRRSKEEYDLQM) adopt a coiled-coil conformation. 2 disordered regions span residues 171–233 (GLGS…ATTA) and 301–337 (RQTGKGLTDTAAAAAPEPKPATQEISVEEKKKLQKRK). Over residues 177 to 220 (LASTSSSVSETPQNPEQRLSNGVSDPLTLTQPDSEMEESSTATQ) the composition is skewed to polar residues. Positions 280–350 (VALQQRSEYL…EKLKEEVIKK (71 aa)) form a coiled coil.

The protein belongs to the CFAP36 family.

Its subcellular location is the nucleus. It is found in the cytoplasm. The protein resides in the cell projection. The protein localises to the cilium. It localises to the flagellum. The polypeptide is Cilia- and flagella-associated protein 36 (Danio rerio (Zebrafish)).